The primary structure comprises 2070 residues: Multiple PDZ domain protein (2070 aa).

The L27 domain occupies 1 to 63 (MLEAIDKNRA…SVQQLKDQVN (63 aa)). In terms of domain architecture, PDZ 1 spans 137–224 (VFELLKPPSG…TVQLVIARGS (88 aa)). Serine 230 is subject to Phosphoserine. 2 PDZ domains span residues 257–337 (TIEL…ARGA) and 377–463 (DVEL…MRRG). Serine 483 bears the Phosphoserine mark. 2 PDZ domains span residues 553–634 (VAHV…CRRT) and 700–786 (HIEL…VAKP). Serine 790 and serine 1078 each carry phosphoserine. In terms of domain architecture, PDZ 6 spans 1008–1089 (TINIAKGNSS…IGPDIKITYV (82 aa)). The disordered stretch occupies residues 1121–1140 (DIPELPEREEGEGEESELQN). Positions 1151 to 1243 (RVELWREPSK…PVVFMVQSII (93 aa)) constitute a PDZ 7 domain. At arginine 1170 the chain carries Omega-N-methylarginine. The interval 1278 to 1324 (ADKAPSQSESEPEKAPLCSVPPPPPSAFAEMGSDHTQSSASKISQDV) is disordered. Polar residues predominate over residues 1311-1321 (DHTQSSASKIS). PDZ domains are found at residues 1350-1433 (MIEL…IRNK) and 1483-1564 (HLEL…HAEN). Positions 1567 to 1612 (SQAVPSAAGAASGEKKNSSQSLMVPQSGSPEPESIRNTSRSSTPAI) are disordered. Over residues 1584 to 1610 (SSQSLMVPQSGSPEPESIRNTSRSSTP) the composition is skewed to polar residues. PDZ domains follow at residues 1629 to 1712 (TIEI…YRDE) and 1725 to 1807 (TIEL…GRIK). Phosphoserine is present on residues serine 1818 and serine 1824. PDZ domains follow at residues 1862 to 1948 (TVEM…VAGG) and 1987 to 2070 (SITL…MVLS).

Interacts with CLDN5, DLG4, GRIN1, F11R/JAM, CLDN1, NG2, CRB1, MPP4 and PALS1. Interacts with HTR2A, HTR2B, HTR2C, PLEKHA1/TAPP1, PLEKHA2/TAPP2, CXADR, SYNGAP1, CAMK2A and CAMK2B. Interacts with FAT4 (via cytoplasmic domain). Interacts with DLL1. As to quaternary structure, (Microbial infection) Interacts with human adenovirus type 9 E4-ORF1 protein. In terms of assembly, (Microbial infection) Interacts with human papillomavirus 18/HPV18 protein E6. As to expression, expressed in heart, brain, placenta, liver, skeletal muscle, kidney and pancreas.

It localises to the cell membrane. Its subcellular location is the apical cell membrane. It is found in the postsynaptic density. The protein resides in the cell projection. The protein localises to the dendrite. It localises to the cell junction. Its subcellular location is the tight junction. It is found in the synapse. The protein resides in the synaptosome. Functionally, member of the NMDAR signaling complex that may play a role in control of AMPAR potentiation and synaptic plasticity in excitatory synapses. Promotes clustering of HT2RC at the cell surface. In Homo sapiens (Human), this protein is Multiple PDZ domain protein (MPDZ).